Here is a 56-residue protein sequence, read N- to C-terminus: Large ribosomal subunit protein bL33 (56 aa).

This sequence belongs to the bacterial ribosomal protein bL33 family.

This is Large ribosomal subunit protein bL33 from Anaplasma phagocytophilum (strain HZ).